Here is a 224-residue protein sequence, read N- to C-terminus: Ribulose-phosphate 3-epimerase (224 aa).

Serine 8 lines the substrate pocket. Residues histidine 31, aspartate 33, and histidine 64 each coordinate a divalent metal cation. Aspartate 33 serves as the catalytic Proton acceptor. Residues histidine 64, 140 to 143 (GFGG), 173 to 175 (DGG), and 195 to 196 (GS) contribute to the substrate site. Aspartate 173 provides a ligand contact to a divalent metal cation. Residue aspartate 173 is the Proton donor of the active site.

Belongs to the ribulose-phosphate 3-epimerase family. A divalent metal cation serves as cofactor.

The enzyme catalyses D-ribulose 5-phosphate = D-xylulose 5-phosphate. It functions in the pathway carbohydrate degradation. Catalyzes the reversible epimerization of D-ribulose 5-phosphate to D-xylulose 5-phosphate. This chain is Ribulose-phosphate 3-epimerase, found in Mycobacterium leprae (strain TN).